The following is a 229-amino-acid chain: Putative N-acetylmannosamine-6-phosphate 2-epimerase (229 aa).

It belongs to the NanE family.

It carries out the reaction an N-acyl-D-glucosamine 6-phosphate = an N-acyl-D-mannosamine 6-phosphate. It participates in amino-sugar metabolism; N-acetylneuraminate degradation; D-fructose 6-phosphate from N-acetylneuraminate: step 3/5. Converts N-acetylmannosamine-6-phosphate (ManNAc-6-P) to N-acetylglucosamine-6-phosphate (GlcNAc-6-P). This chain is Putative N-acetylmannosamine-6-phosphate 2-epimerase, found in Haemophilus ducreyi (strain 35000HP / ATCC 700724).